We begin with the raw amino-acid sequence, 158 residues long: SsrA-binding protein (158 aa).

Residues 133-148 show a composition bias toward basic and acidic residues; sequence KAQDKRETSAKRDWNR. A disordered region spans residues 133-158; the sequence is KAQDKRETSAKRDWNRQKARLLKQNG. The span at 149–158 shows a compositional bias: basic residues; sequence QKARLLKQNG.

It belongs to the SmpB family.

It localises to the cytoplasm. Required for rescue of stalled ribosomes mediated by trans-translation. Binds to transfer-messenger RNA (tmRNA), required for stable association of tmRNA with ribosomes. tmRNA and SmpB together mimic tRNA shape, replacing the anticodon stem-loop with SmpB. tmRNA is encoded by the ssrA gene; the 2 termini fold to resemble tRNA(Ala) and it encodes a 'tag peptide', a short internal open reading frame. During trans-translation Ala-aminoacylated tmRNA acts like a tRNA, entering the A-site of stalled ribosomes, displacing the stalled mRNA. The ribosome then switches to translate the ORF on the tmRNA; the nascent peptide is terminated with the 'tag peptide' encoded by the tmRNA and targeted for degradation. The ribosome is freed to recommence translation, which seems to be the essential function of trans-translation. In Jannaschia sp. (strain CCS1), this protein is SsrA-binding protein.